A 247-amino-acid polypeptide reads, in one-letter code: GTP cyclohydrolase 1 type 2 homolog (247 aa).

A divalent metal cation contacts are provided by histidine 63, histidine 64, aspartate 101, histidine 215, and glutamate 219.

The protein belongs to the GTP cyclohydrolase I type 2/NIF3 family. Toroid-shaped homohexamer. In the hexamer, 3 dimers assemble to form a ring-like structure surrounding a central hole.

Provides significant protection from radiation damage and may be involved in the degradation of radiation-damaged nucleotides. This Escherichia coli O157:H7 protein is GTP cyclohydrolase 1 type 2 homolog (ybgI).